The primary structure comprises 376 residues: Succinyl-diaminopimelate desuccinylase (376 aa).

Residue histidine 66 participates in Zn(2+) binding. Residue aspartate 68 is part of the active site. Residue aspartate 99 participates in Zn(2+) binding. Glutamate 133 serves as the catalytic Proton acceptor. Residues glutamate 134, glutamate 162, and histidine 348 each contribute to the Zn(2+) site.

Belongs to the peptidase M20A family. DapE subfamily. In terms of assembly, homodimer. Requires Zn(2+) as cofactor. It depends on Co(2+) as a cofactor.

The catalysed reaction is N-succinyl-(2S,6S)-2,6-diaminopimelate + H2O = (2S,6S)-2,6-diaminopimelate + succinate. It functions in the pathway amino-acid biosynthesis; L-lysine biosynthesis via DAP pathway; LL-2,6-diaminopimelate from (S)-tetrahydrodipicolinate (succinylase route): step 3/3. In terms of biological role, catalyzes the hydrolysis of N-succinyl-L,L-diaminopimelic acid (SDAP), forming succinate and LL-2,6-diaminopimelate (DAP), an intermediate involved in the bacterial biosynthesis of lysine and meso-diaminopimelic acid, an essential component of bacterial cell walls. The chain is Succinyl-diaminopimelate desuccinylase from Xanthomonas oryzae pv. oryzae (strain MAFF 311018).